We begin with the raw amino-acid sequence, 421 residues long: Tyrosine--tRNA ligase (421 aa).

Tyr-35 contacts L-tyrosine. The short motif at 40–49 is the 'HIGH' region element; that stretch reads PTADSLHIGH. Residues Tyr-170 and Gln-174 each contribute to the L-tyrosine site. Residues 232-236 carry the 'KMSKS' region motif; the sequence is KFGKT. ATP is bound at residue Lys-235. The 67-residue stretch at 355–421 folds into the S4 RNA-binding domain; the sequence is LSLVDVLVES…GKKKYFLITY (67 aa).

The protein belongs to the class-I aminoacyl-tRNA synthetase family. TyrS type 1 subfamily. Homodimer.

It is found in the cytoplasm. The enzyme catalyses tRNA(Tyr) + L-tyrosine + ATP = L-tyrosyl-tRNA(Tyr) + AMP + diphosphate + H(+). Its function is as follows. Catalyzes the attachment of tyrosine to tRNA(Tyr) in a two-step reaction: tyrosine is first activated by ATP to form Tyr-AMP and then transferred to the acceptor end of tRNA(Tyr). The polypeptide is Tyrosine--tRNA ligase (Bacillus velezensis (strain DSM 23117 / BGSC 10A6 / LMG 26770 / FZB42) (Bacillus amyloliquefaciens subsp. plantarum)).